The primary structure comprises 234 residues: Cysteine proteinase inhibitor 6 (234 aa).

The first 24 residues, 1-24 (MMRSRFLLFIVFFSLSLFISSLIA), serve as a signal peptide directing secretion. Position 2 is an N-acetylalanine (methionine 2). Cystatin domains lie at 38–126 (GGVG…KPAS) and 145–215 (SGWR…FKVE). Residues 82-86 (QVVAG) carry the Secondary area of contact motif. A disordered region spans residues 133–154 (SSDLGCKQGEHESGWREVPGDD). Residues 140-154 (QGEHESGWREVPGDD) show a composition bias toward basic and acidic residues. The residue at position 174 (serine 174) is a Phosphoserine.

It belongs to the cystatin family. Phytocystatin subfamily.

The protein resides in the secreted. Its function is as follows. Specific inhibitor of cysteine proteinases. Probably involved in the regulation of endogenous processes and in defense against pests and pathogens. The protein is Cysteine proteinase inhibitor 6 (CYS6) of Arabidopsis thaliana (Mouse-ear cress).